The following is a 389-amino-acid chain: Galactokinase (389 aa).

34 to 37 (EHTD) contributes to the substrate binding site. Residues serine 68 and 125 to 131 (GSGLSSS) contribute to the ATP site. Mg(2+) is bound by residues serine 131 and glutamate 163. The Proton acceptor role is filled by aspartate 175. Tyrosine 225 contacts substrate.

The protein belongs to the GHMP kinase family. GalK subfamily.

It localises to the cytoplasm. The catalysed reaction is alpha-D-galactose + ATP = alpha-D-galactose 1-phosphate + ADP + H(+). Its pathway is carbohydrate metabolism; galactose metabolism. In terms of biological role, catalyzes the transfer of the gamma-phosphate of ATP to D-galactose to form alpha-D-galactose-1-phosphate (Gal-1-P). This Clostridium acetobutylicum (strain ATCC 824 / DSM 792 / JCM 1419 / IAM 19013 / LMG 5710 / NBRC 13948 / NRRL B-527 / VKM B-1787 / 2291 / W) protein is Galactokinase.